Reading from the N-terminus, the 446-residue chain is UDP-N-acetylmuramoylalanine--D-glutamate ligase (446 aa).

115-121 (GSNGKST) contributes to the ATP binding site.

This sequence belongs to the MurCDEF family.

The protein resides in the cytoplasm. The enzyme catalyses UDP-N-acetyl-alpha-D-muramoyl-L-alanine + D-glutamate + ATP = UDP-N-acetyl-alpha-D-muramoyl-L-alanyl-D-glutamate + ADP + phosphate + H(+). It participates in cell wall biogenesis; peptidoglycan biosynthesis. In terms of biological role, cell wall formation. Catalyzes the addition of glutamate to the nucleotide precursor UDP-N-acetylmuramoyl-L-alanine (UMA). The sequence is that of UDP-N-acetylmuramoylalanine--D-glutamate ligase from Hahella chejuensis (strain KCTC 2396).